A 906-amino-acid polypeptide reads, in one-letter code: Probable helicase HelY (906 aa).

The Helicase ATP-binding domain maps to 26–184; it reads CSALERGHGV…WIQTVRGDTT (159 aa). 39–46 serves as a coordination point for ATP; that stretch reads APTGAGKT. Residues 132–135 carry the DEVH box motif; sequence DEVH. Residues 259–463 enclose the Helicase C-terminal domain; it reads GRPEVIAKLD…SYNMTINLVH (205 aa).

It belongs to the helicase family. SKI2 subfamily.

The polypeptide is Probable helicase HelY (helY) (Mycobacterium tuberculosis (strain CDC 1551 / Oshkosh)).